The sequence spans 147 residues: Hemoglobin subunit gamma (147 aa).

Positions H3 to H147 constitute a Globin domain. 2 residues coordinate heme b: H64 and H93.

Belongs to the globin family. In terms of assembly, heterotetramer of two alpha chains and two gamma chains in fetal hemoglobin (Hb F). In terms of tissue distribution, red blood cells.

In terms of biological role, gamma chains make up the fetal hemoglobin F, in combination with alpha chains. This chain is Hemoglobin subunit gamma (HBG), found in Eulemur fulvus fulvus (Brown lemur).